Consider the following 402-residue polypeptide: Zinc finger CCHC domain-containing protein 12 (402 aa).

The span at 268–277 shows a compositional bias: acidic residues; that stretch reads DTPDDSDEDV. The disordered stretch occupies residues 268-342; sequence DTPDDSDEDV…PGNMRRTRKR (75 aa). Positions 311-323 are enriched in polar residues; sequence SPNNSQFPSPCTS. The CCHC-type zinc-finger motif lies at 346–363; that stretch reads IRCSYCGEEGHSKETCDN. The segment covering 383 to 392 has biased composition (basic and acidic residues); the sequence is HTEERSREAP. Positions 383-402 are disordered; it reads HTEERSREAPVEPSDPCELQ.

Belongs to the ZCCHC12 family. In terms of assembly, interacts with SMAD1 and CREB-binding protein (CBP). Forms a protein-DNA complex through its association with SMAD1.

Functionally, transcriptional coactivator in the bone morphogenetic protein (BMP)-signaling pathway. It positively modulates BMP signaling by interacting with SMAD1 and associating with CBP in the transcription complex. It contributes to the BMP-induced enhancement of cholinergic-neuron-specific gene expression. This chain is Zinc finger CCHC domain-containing protein 12 (ZCCHC12), found in Bos taurus (Bovine).